The following is a 145-amino-acid chain: Bacilliredoxin SAOUHSC_01610 (145 aa).

The protein belongs to the bacilliredoxin family.

This Staphylococcus aureus (strain NCTC 8325 / PS 47) protein is Bacilliredoxin SAOUHSC_01610.